The primary structure comprises 357 residues: Histidinol-phosphate aminotransferase 2 (357 aa).

The residue at position 215 (K215) is an N6-(pyridoxal phosphate)lysine.

Belongs to the class-II pyridoxal-phosphate-dependent aminotransferase family. Histidinol-phosphate aminotransferase subfamily. As to quaternary structure, homodimer. The cofactor is pyridoxal 5'-phosphate.

The catalysed reaction is L-histidinol phosphate + 2-oxoglutarate = 3-(imidazol-4-yl)-2-oxopropyl phosphate + L-glutamate. The protein operates within amino-acid biosynthesis; L-histidine biosynthesis; L-histidine from 5-phospho-alpha-D-ribose 1-diphosphate: step 7/9. In Thiobacillus denitrificans (strain ATCC 25259 / T1), this protein is Histidinol-phosphate aminotransferase 2.